The chain runs to 527 residues: Bifunctional purine biosynthesis protein PurH (527 aa).

Residues 1 to 149 (MASDFLPVHR…KNFARVAVAT (149 aa)) enclose the MGS-like domain.

This sequence belongs to the PurH family.

It catalyses the reaction (6R)-10-formyltetrahydrofolate + 5-amino-1-(5-phospho-beta-D-ribosyl)imidazole-4-carboxamide = 5-formamido-1-(5-phospho-D-ribosyl)imidazole-4-carboxamide + (6S)-5,6,7,8-tetrahydrofolate. It carries out the reaction IMP + H2O = 5-formamido-1-(5-phospho-D-ribosyl)imidazole-4-carboxamide. It participates in purine metabolism; IMP biosynthesis via de novo pathway; 5-formamido-1-(5-phospho-D-ribosyl)imidazole-4-carboxamide from 5-amino-1-(5-phospho-D-ribosyl)imidazole-4-carboxamide (10-formyl THF route): step 1/1. The protein operates within purine metabolism; IMP biosynthesis via de novo pathway; IMP from 5-formamido-1-(5-phospho-D-ribosyl)imidazole-4-carboxamide: step 1/1. This is Bifunctional purine biosynthesis protein PurH from Xylella fastidiosa (strain 9a5c).